Consider the following 396-residue polypeptide: Phosphoglycerate kinase (396 aa).

Substrate-binding positions include 21–23 (DLN), arginine 36, 59–62 (HLGR), arginine 113, and arginine 146. ATP-binding positions include lysine 197, glutamate 319, and 345 to 348 (GGDT).

It belongs to the phosphoglycerate kinase family. Monomer.

Its subcellular location is the cytoplasm. The catalysed reaction is (2R)-3-phosphoglycerate + ATP = (2R)-3-phospho-glyceroyl phosphate + ADP. It participates in carbohydrate degradation; glycolysis; pyruvate from D-glyceraldehyde 3-phosphate: step 2/5. In Legionella pneumophila (strain Paris), this protein is Phosphoglycerate kinase.